The sequence spans 272 residues: Putative phosphoenolpyruvate synthase regulatory protein (272 aa).

152–159 contacts ADP; it reads GVSRCGKT.

This sequence belongs to the pyruvate, phosphate/water dikinase regulatory protein family. PSRP subfamily.

It catalyses the reaction [pyruvate, water dikinase] + ADP = [pyruvate, water dikinase]-phosphate + AMP + H(+). The catalysed reaction is [pyruvate, water dikinase]-phosphate + phosphate + H(+) = [pyruvate, water dikinase] + diphosphate. Bifunctional serine/threonine kinase and phosphorylase involved in the regulation of the phosphoenolpyruvate synthase (PEPS) by catalyzing its phosphorylation/dephosphorylation. The protein is Putative phosphoenolpyruvate synthase regulatory protein of Pseudomonas putida (strain GB-1).